Here is a 91-residue protein sequence, read N- to C-terminus: uncharacterized protein (91 aa).

Residues 12–34 traverse the membrane as a helical segment; the sequence is FAIVYANITFLFYYLLDFTLPFH.

The protein localises to the membrane. This is an uncharacterized protein from Saccharomyces cerevisiae (strain ATCC 204508 / S288c) (Baker's yeast).